Consider the following 965-residue polypeptide: Inner tegument protein (965 aa).

An interaction with large tegument protein region spans residues 489–965; sequence WDLNKFYVLS…KLEQSITGSF (477 aa).

The protein belongs to the herpesviridae inner tegument protein family. In terms of assembly, interacts (via C-terminus) with the large tegument protein/LTP (via N-terminus).

It localises to the virion tegument. The protein localises to the host cytoplasm. The protein resides in the host nucleus. Its subcellular location is the host Golgi apparatus. It is found in the host trans-Golgi network. In terms of biological role, plays an essential role in cytoplasmic secondary envelopment during viral egress. Interacts with the capsid via the large tegument protein/LTP and participates in its transport to the host trans-Golgi network (TGN) where secondary envelopment occurs. Modulates tegumentation and capsid accumulation at the viral assembly complex. This chain is Inner tegument protein (63), found in Equine herpesvirus 2 (strain 86/87) (EHV-2).